The following is a 256-amino-acid chain: Thioredoxin-dependent peroxide reductase, mitochondrial (256 aa).

The transit peptide at 1–61 (MAAAVGRLLR…KLFSTSSSYH (61 aa)) directs the protein to the mitochondrion. A Thioredoxin domain is found at 63 to 221 (PAVTQHAPYF…TLRLVKAFQY (159 aa)). The residue at position 83 (Lys-83) is an N6-succinyllysine. The residue at position 91 (Lys-91) is an N6-acetyllysine; alternate. Position 91 is an N6-succinyllysine; alternate (Lys-91). Catalysis depends on Cys-108, which acts as the Cysteine sulfenic acid (-SOH) intermediate. Thr-146 carries the post-translational modification Phosphothreonine.

It belongs to the peroxiredoxin family. AhpC/Prx1 subfamily. As to quaternary structure, homodimer; disulfide-linked, upon oxidation. 6 homodimers assemble to form a ring-like dodecamer. Interacts with NEK6. Interacts with LRRK2. Interacts with MAP3K13. Interacts with RPS6KC1 (via PX domain). Phosphorylated by LRRK2; phosphorylation reduces perodixase activity. Post-translationally, the enzyme can be inactivated by further oxidation of the cysteine sulfenic acid (C(P)-SOH) to sulphinic acid (C(P)-SO2H) and sulphonic acid (C(P)-SO3H) instead of its condensation to a disulfide bond. In terms of processing, S-palmitoylated.

Its subcellular location is the mitochondrion. The protein localises to the cytoplasm. It is found in the early endosome. The catalysed reaction is a hydroperoxide + [thioredoxin]-dithiol = an alcohol + [thioredoxin]-disulfide + H2O. In terms of biological role, thiol-specific peroxidase that catalyzes the reduction of hydrogen peroxide and organic hydroperoxides to water and alcohols, respectively. Plays a role in cell protection against oxidative stress by detoxifying peroxides. Acts synergistically with MAP3K13 to regulate the activation of NF-kappa-B in the cytosol. Required for the maintenance of physical strength. This Pongo abelii (Sumatran orangutan) protein is Thioredoxin-dependent peroxide reductase, mitochondrial (PRDX3).